Here is an 84-residue protein sequence, read N- to C-terminus: Large ribosomal subunit protein bL27 (84 aa).

Over residues 1 to 11 (MATTKAGGSTK) the composition is skewed to polar residues. The disordered stretch occupies residues 1-20 (MATTKAGGSTKNGRDSHSKR).

This sequence belongs to the bacterial ribosomal protein bL27 family.

In Mycoplasmopsis synoviae (strain 53) (Mycoplasma synoviae), this protein is Large ribosomal subunit protein bL27.